A 348-amino-acid polypeptide reads, in one-letter code: UDP-N-acetyl-alpha-D-glucosaminouronate 4-epimerase (348 aa).

Residues phenylalanine 26, isoleucine 27, aspartate 46, threonine 50, glycine 51, aspartate 77, isoleucine 78, glutamine 97, tyrosine 165, lysine 169, and valine 195 each coordinate NAD(+). The Proton acceptor role is filled by tyrosine 165.

This sequence belongs to the NAD(P)-dependent epimerase/dehydratase family. Homodimer. It depends on NAD(+) as a cofactor.

It catalyses the reaction UDP-2-acetamido-2-deoxy-alpha-D-glucuronate = UDP-2-acetamido-2-deoxy-alpha-D-galacturonate. It carries out the reaction UDP-N-acetyl-alpha-D-glucosamine = UDP-N-acetyl-alpha-D-galactosamine. It functions in the pathway capsule biogenesis; capsule polysaccharide biosynthesis. Its pathway is glycan metabolism; Vi-antigen biosynthesis. Epimerase required for the biosynthesis of the capsular polysaccharide, commonly referred as the Vi antigen, an important virulence factor. Catalyzes the reversible epimerization of UDP-N-acetylglucosaminuronic acid (UDP-GlcNAcA) to UDP-N-acetylgalactosaminuronic acid (UDP-GalNAcA). Also catalyzes, with lower efficiency, the reversible epimerization of UDP-N-acetylglucosamine (UDP-GlcNAc) to UDP-N-acetylgalactosamine (UDP-GalNAc). Cannot use UDP-glucose (UDP-Glc) and UDP-galactose (UDP-Gal) as substrates. This Salmonella typhi protein is UDP-N-acetyl-alpha-D-glucosaminouronate 4-epimerase.